A 434-amino-acid chain; its full sequence is Histidinol dehydrogenase (434 aa).

Residues Tyr130, Gln191, and Asn214 each contribute to the NAD(+) site. 3 residues coordinate substrate: Ser237, Gln259, and His262. Zn(2+)-binding residues include Gln259 and His262. Residues Glu327 and His328 each act as proton acceptor in the active site. 4 residues coordinate substrate: His328, Asp361, Glu415, and His420. A Zn(2+)-binding site is contributed by Asp361. His420 is a binding site for Zn(2+).

The protein belongs to the histidinol dehydrogenase family. The cofactor is Zn(2+).

The catalysed reaction is L-histidinol + 2 NAD(+) + H2O = L-histidine + 2 NADH + 3 H(+). It functions in the pathway amino-acid biosynthesis; L-histidine biosynthesis; L-histidine from 5-phospho-alpha-D-ribose 1-diphosphate: step 9/9. Functionally, catalyzes the sequential NAD-dependent oxidations of L-histidinol to L-histidinaldehyde and then to L-histidine. The protein is Histidinol dehydrogenase of Chromobacterium violaceum (strain ATCC 12472 / DSM 30191 / JCM 1249 / CCUG 213 / NBRC 12614 / NCIMB 9131 / NCTC 9757 / MK).